The sequence spans 266 residues: tRNA pseudouridine synthase A (266 aa).

The active-site Nucleophile is the D56. Residue Y110 coordinates substrate.

The protein belongs to the tRNA pseudouridine synthase TruA family.

The catalysed reaction is uridine(38/39/40) in tRNA = pseudouridine(38/39/40) in tRNA. Formation of pseudouridine at positions 38, 39 and 40 in the anticodon stem and loop of transfer RNAs. This is tRNA pseudouridine synthase A from Halobacterium salinarum (strain ATCC 29341 / DSM 671 / R1).